Here is a 157-residue protein sequence, read N- to C-terminus: Beta-defensin 125 (157 aa).

A signal peptide spans 1–20; sequence MNILMLTFIICGLLTQVTKG. 3 disulfides stabilise this stretch: cysteine 27/cysteine 55, cysteine 35/cysteine 49, and cysteine 39/cysteine 56. The disordered stretch occupies residues 109-157; the sequence is GETMTPETNTPETTVPPSETTTPETTMPPSETATSETMPPPSQTALTHN. Residues 110 to 145 are compositionally biased toward low complexity; sequence ETMTPETNTPETTVPPSETTTPETTMPPSETATSET.

This sequence belongs to the beta-defensin family.

The protein localises to the secreted. Has antibacterial activity. The protein is Beta-defensin 125 (DEFB125) of Gorilla gorilla gorilla (Western lowland gorilla).